The following is a 266-amino-acid chain: MYIELQTKKVSVLDLKGNQLEEIELPLFFSYPVRKDLIRRVFLSEFTKSLQPKGRDPLAGKRTSALSFGINLGIARVPRVKGSGEAALAPNTVGGRLAFPPTTEKRLVEEVNLKEKKLGIISALAATADPNFVKARGHRFTSNNVPIILVDDFENISKAKEIMDILKSIGVVDDIKRVKESKGVRAGKGKMRGRRYQIAKGPLIVVSNHKSPVVESASNIPGVNVVSANLVSVIHLAPGGHPGRLTIYTKSSINILRQRFEGRLNL.

Belongs to the universal ribosomal protein uL4 family. In terms of assembly, part of the 50S ribosomal subunit.

In terms of biological role, one of the primary rRNA binding proteins, this protein initially binds near the 5'-end of the 23S rRNA. It is important during the early stages of 50S assembly. It makes multiple contacts with different domains of the 23S rRNA in the assembled 50S subunit and ribosome. Forms part of the polypeptide exit tunnel. This Sulfolobus acidocaldarius (strain ATCC 33909 / DSM 639 / JCM 8929 / NBRC 15157 / NCIMB 11770) protein is Large ribosomal subunit protein uL4.